Consider the following 224-residue polypeptide: Putative O-methyltransferase MT1258 (224 aa).

The segment covering 1–10 (MDGTPGHDDM) has biased composition (basic and acidic residues). The disordered stretch occupies residues 1–21 (MDGTPGHDDMPGQPAPSRGES). S-adenosyl-L-methionine-binding positions include Val51, Glu73, 75-76 (GT), Ser81, Asp99, and Ile100. Asp147 lines the substrate pocket. Asp149 contributes to the S-adenosyl-L-methionine binding site.

This sequence belongs to the class I-like SAM-binding methyltransferase superfamily. Cation-dependent O-methyltransferase family.

This is Putative O-methyltransferase MT1258 from Mycobacterium tuberculosis (strain CDC 1551 / Oshkosh).